Consider the following 362-residue polypeptide: Melatonin receptor type 1B (362 aa).

Residues 1–42 (MSENGSFANCCEAGGWAVRPGWSGAGSARPSRTPRPPWVAPA) are Extracellular-facing. Residue asparagine 4 is glycosylated (N-linked (GlcNAc...) asparagine). The chain crosses the membrane as a helical span at residues 43-63 (LSAVLIVTTAVDVVGNLLVIL). Residues 64 to 76 (SVLRNRKLRNAGN) are Cytoplasmic-facing. Residues 77-97 (LFLVSLALADLVVAFYPYPLI) traverse the membrane as a helical segment. Residues 98–115 (LVAIFYDGWALGEEHCKA) lie on the Extracellular side of the membrane. A disulfide bridge links cysteine 113 with cysteine 190. A helical transmembrane segment spans residues 116–136 (SAFVMGLSVIGSVFNITAIAI). Residues 137–155 (NRYCYICHSMAYHRIYRRW) lie on the Cytoplasmic side of the membrane. Residues 156 to 176 (HTPLHICLIWLLTVVALLPNF) traverse the membrane as a helical segment. 2 residues coordinate melatonin: asparagine 175 and glutamine 194. The Extracellular portion of the chain corresponds to 177 to 200 (FVGSLEYDPRIYSCTFIQTASTQY). The chain crosses the membrane as a helical span at residues 201 to 221 (TAAVVVIHFLLPIAVVSFCYL). Residues 222–253 (RIWVLVLQARRKAKPESRLCLKPSDLRSFLTM) lie on the Cytoplasmic side of the membrane. The chain crosses the membrane as a helical span at residues 254–274 (FVVFVIFAICWAPLNCIGLAV). The Extracellular portion of the chain corresponds to 275–287 (AINPQEMAPQIPE). A helical transmembrane segment spans residues 288-308 (GLFVTSYLLAYFNSCLNAIVY). Residues 309–362 (GLLNQNFRREYKRILLALWNPRHCIQDASKGSHAEGLQSPAPPIIGVQHQADAL) lie on the Cytoplasmic side of the membrane.

The protein belongs to the G-protein coupled receptor 1 family. As to quaternary structure, interacts with GPR61, GPR62 and GPR135. Expressed in retina and less in brain and hippocampus.

The protein resides in the cell membrane. In terms of biological role, high affinity receptor for melatonin. Likely to mediate the reproductive and circadian actions of melatonin. The activity of this receptor is mediated by pertussis toxin sensitive G proteins that inhibit adenylate cyclase activity. The protein is Melatonin receptor type 1B (MTNR1B) of Homo sapiens (Human).